Reading from the N-terminus, the 414-residue chain is Probable tRNA pseudouridine synthase D (414 aa).

The Nucleophile role is filled by D90. Residues G162–A382 form the TRUD domain.

The protein belongs to the pseudouridine synthase TruD family.

It carries out the reaction uridine(13) in tRNA = pseudouridine(13) in tRNA. Its function is as follows. Could be responsible for synthesis of pseudouridine from uracil-13 in transfer RNAs. This is Probable tRNA pseudouridine synthase D from Picrophilus torridus (strain ATCC 700027 / DSM 9790 / JCM 10055 / NBRC 100828 / KAW 2/3).